A 376-amino-acid chain; its full sequence is MARVEL domain-containing protein 3 (376 aa).

Over residues 1-95 the composition is skewed to basic and acidic residues; that stretch reads MKNTSGHREP…EKSRQSRARP (95 aa). The segment at 1–134 is disordered; it reads MKNTSGHREP…GRRGLESERA (134 aa). The Cytoplasmic portion of the chain corresponds to 1–173; the sequence is MKNTSGHREP…HKCRYLCTGR (173 aa). Residues 168-361 enclose the MARVEL domain; that stretch reads YLCTGRACWQ…GAVLAFRGYR (194 aa). Residues 174–194 traverse the membrane as a helical segment; the sequence is ACWQMLKALLNLLILACSSVS. Residues 195-247 lie on the Extracellular side of the membrane; that stretch reads YNSTGGYTGITSLGGIYYYQYGGAYSGFDGADGERAQQLDVQFYQLKLPTVTA. A helical membrane pass occupies residues 248–268; it reads AMAYSGALMTFSCLTLLAGAL. The Cytoplasmic segment spans residues 269 to 275; the sequence is RVPWHCP. The helical transmembrane segment at 276-296 threads the bilayer; that stretch reads LWLVIEGLMDALIAGAYVPGL. Residues 297-335 lie on the Extracellular side of the membrane; the sequence is YFFFQHLSAAYSSDVCKERETLYQSKGYSGFNCGVHGGD. A helical transmembrane segment spans residues 336–356; sequence IGAGVFAAMAIGVFAVGAVLA. At 357 to 376 the chain is on the cytoplasmic side; sequence FRGYRKVKKLKEKPTEMLEF.

As to expression, widely expressed with highest levels in small intestine, colon, stomach and lung. Liver expresses only isoform 2.

The protein resides in the membrane. It is found in the cell junction. The protein localises to the tight junction. In terms of biological role, as a component of tight junctions, plays a role in paracellular ion conductivity. The chain is MARVEL domain-containing protein 3 (Marveld3) from Mus musculus (Mouse).